We begin with the raw amino-acid sequence, 398 residues long: Thyrotropin-releasing hormone receptor (398 aa).

The Extracellular segment spans residues Met-1 to Thr-28. Residues Asn-3 and Asn-10 are each glycosylated (N-linked (GlcNAc...) asparagine). Residues Ile-29–Met-51 traverse the membrane as a helical segment. Residues Arg-52–Asn-61 are Cytoplasmic-facing. The chain crosses the membrane as a helical span at residues Cys-62–Ile-83. The Extracellular segment spans residues Thr-84 to Leu-99. A disulfide bridge connects residues Cys-98 and Cys-179. The chain crosses the membrane as a helical span at residues Cys-100–Ile-121. The Cytoplasmic segment spans residues Glu-122–Lys-144. Residues Ile-145 to Ile-168 traverse the membrane as a helical segment. Topologically, residues Ser-169–Leu-193 are extracellular. The helical transmembrane segment at Met-194 to Ala-215 threads the bilayer. Over Arg-216–Lys-266 the chain is Cytoplasmic. Residues Met-267 to Val-288 traverse the membrane as a helical segment. Residues Asn-289–Phe-296 are Extracellular-facing. A helical transmembrane segment spans residues Gln-297–Ile-319. The Cytoplasmic segment spans residues Tyr-320 to Ser-398.

The protein belongs to the G-protein coupled receptor 1 family.

Its subcellular location is the cell membrane. Receptor for thyrotropin-releasing hormone (TRH). Upon ligand binding, this G-protein-coupled receptor triggers activation of the phosphatidylinositol (IP3)-calcium-protein kinase C (PKC) pathway. This chain is Thyrotropin-releasing hormone receptor (TRHR), found in Bos taurus (Bovine).